A 296-amino-acid chain; its full sequence is DNA-3-methyladenine glycosylase (296 aa).

S110 is modified (phosphoserine). D209 acts as the Proton acceptor in catalysis.

It belongs to the alkylbase DNA glycosidase AlkA family.

Its subcellular location is the nucleus. It carries out the reaction Hydrolysis of alkylated DNA, releasing 3-methyladenine, 3-methylguanine, 7-methylguanine and 7-methyladenine.. Hydrolysis of the deoxyribose N-glycosidic bond to excise 3-methyladenine or 7-methyladenine from the damaged DNA polymer formed by alkylation lesions. This chain is DNA-3-methyladenine glycosylase (MAG1), found in Saccharomyces cerevisiae (strain ATCC 204508 / S288c) (Baker's yeast).